The primary structure comprises 305 residues: MNSENTQIVAALYKFVKLPDFAQKRDPLLSYCQAQGVKGTILLAQEGINGTIAGSRQAIDSVLWFLRSDPRLADLEYKESYTETPPFERMKVRLKSEIVTLGLPEIDPTEKVGTYVSPQEWNDLICDPEVTVIDTRNDYEVNIGTFQGAENPQTGSFREFPDYVVHNLDPTKHKKVALFCTGGIRCEKASSFMLAQGFAEVYHLKGGILKYLEEVPAQESLWQGECFVFDERVAVSHGLEEGSYELCFCCGYPISEEDKISPKYEQGISCAYCFDSLTEEKRARQQEKWRHYQTQVANSKNRDVS.

A Rhodanese domain is found at C126–S220. Catalysis depends on C180, which acts as the Cysteine persulfide intermediate.

It belongs to the TrhO family.

The catalysed reaction is uridine(34) in tRNA + AH2 + O2 = 5-hydroxyuridine(34) in tRNA + A + H2O. Catalyzes oxygen-dependent 5-hydroxyuridine (ho5U) modification at position 34 in tRNAs. This chain is tRNA uridine(34) hydroxylase, found in Nostoc punctiforme (strain ATCC 29133 / PCC 73102).